A 269-amino-acid polypeptide reads, in one-letter code: MNQEDLDPDSTTDVGDVTNTEEELIRECEEMWKDMEECQNKLSLIGTETLTDSNAQLSLLIMQVKCLTAELSQWQKKTPETIPLTEDVLITLGKEEFQKLRQDLEMVLSTKESKNEKLKEDLEREQRWLDEQQQIMESLNVLHSELKNKVETFSESRIFNELKTKMLNIKEYKEKLLSTLGEFLEDHFPLPDRSVKKKKKNIQESSVNLITLHEMLEILINRLFDVPHDPYVKISDSFWPPYVELLLRNGIALRHPEDPTRIRLEAFHQ.

Residues 1–10 show a composition bias toward acidic residues; that stretch reads MNQEDLDPDS. The disordered stretch occupies residues 1-20; sequence MNQEDLDPDSTTDVGDVTNT. 2 coiled-coil regions span residues 22-42 and 98-151; these read EELI…QNKL and QKLR…NKVE.

The protein belongs to the CENP-K/MCM22 family. As to quaternary structure, component of the CENPA-CAD complex, composed of CENPI, CENPK, CENPL, CENPO, CENPP, CENPQ, CENPR and CENPS. The CENPA-CAD complex interacts with the CENPA-NAC complex, at least composed of CENPA, CENPC, CENPH, CENPM, CENPN, CENPT and CENPU. Interacts directly with CENPH. Detected in several fetal organs with highest levels in fetal liver. In adults, it is weakly expressed in lung and placenta.

It is found in the nucleus. It localises to the chromosome. The protein localises to the centromere. Its subcellular location is the kinetochore. Component of the CENPA-CAD (nucleosome distal) complex, a complex recruited to centromeres which is involved in assembly of kinetochore proteins, mitotic progression and chromosome segregation. May be involved in incorporation of newly synthesized CENPA into centromeres via its interaction with the CENPA-NAC complex. Acts in coordination with KNL1 to recruit the NDC80 complex to the outer kinetochore. This is Centromere protein K (CENPK) from Homo sapiens (Human).